Here is a 201-residue protein sequence, read N- to C-terminus: MSKPVEFEMLVDALKSLPGVGTKNANKWAFFLLQQDQKYIDDLIKRIKEAKTNILKCKYCANFTNKDECDICLNEYRDFTKLMIVTTNEDLERIESANIYNGLYHITNGEISLRKNVVIEHTNIKTIKERVLNGSFKEIIIATSYTHDGEVTADYIIRMLEDIKDLQIYRIGFGIPLNSSIDYADDETLKQSLINKRKIRN.

The segment at 57-72 adopts a C4-type zinc-finger fold; the sequence is CKYCANFTNKDECDIC. The region spanning 80–176 is the Toprim domain; sequence TKLMIVTTNE…QIYRIGFGIP (97 aa).

The protein belongs to the RecR family.

Its function is as follows. May play a role in DNA repair. It seems to be involved in an RecBC-independent recombinational process of DNA repair. It may act with RecF and RecO. This chain is Recombination protein RecR, found in Ureaplasma parvum serovar 3 (strain ATCC 27815 / 27 / NCTC 11736).